The following is a 226-amino-acid chain: Transcriptional regulatory protein CitT (226 aa).

A Response regulatory domain is found at 3–119; the sequence is HIAIAEDDFR…KFRQVLLQYK (117 aa). Asp54 carries the 4-aspartylphosphate modification. A DNA-binding region (H-T-H motif) is located at residues 178 to 197; it reads AEELGEKMGASRTTARRYAE.

In terms of processing, phosphorylated by CitS.

The protein resides in the cytoplasm. Member of the two-component regulatory system CitT/CitS. Regulates the expression of the citM-yflN operon. Phosphorylated CitT binds to the citM promoter to activate the transcription of the citM-yflN operon. This Bacillus subtilis (strain 168) protein is Transcriptional regulatory protein CitT (citT).